Consider the following 610-residue polypeptide: Phosphoenolpyruvate carboxykinase [GTP] (610 aa).

Substrate-binding positions include R82 and 221-223 (YGG). Residues K230 and H250 each coordinate Mn(2+). S272 contacts substrate. 273–278 (ACGKTN) contributes to the GTP binding site. Residue C274 is part of the active site. Residue D297 coordinates Mn(2+). 387 to 389 (NSR) is a substrate binding site. Residues R389, R420, and 515–518 (FGDN) each bind GTP.

This sequence belongs to the phosphoenolpyruvate carboxykinase [GTP] family. In terms of assembly, monomer. Mn(2+) serves as cofactor.

It localises to the cytoplasm. The enzyme catalyses oxaloacetate + GTP = phosphoenolpyruvate + GDP + CO2. The protein operates within carbohydrate biosynthesis; gluconeogenesis. Functionally, catalyzes the conversion of oxaloacetate (OAA) to phosphoenolpyruvate (PEP), the rate-limiting step in the metabolic pathway that produces glucose from lactate and other precursors derived from the citric acid cycle. The protein is Phosphoenolpyruvate carboxykinase [GTP] of Corynebacterium glutamicum (strain R).